A 234-amino-acid chain; its full sequence is MYRINLTTFTLLLVLAVGSLMSESLHPSDGAINDLYEYLLQREYAAPVSYADHQIKRKAVRSPSLRLRFGRRSDPSVPLRPEEDELIDQKAIRAPQLRLRFGRNDPLWTSFNENALLEENFEKRAPSQRLRWGRSNLFGNLVNQFQQDDVMQQKTIRAPQLRLRFGRTDPSWAMYNEHQLTTGQQAQPANEASEKRAPTQRLRWGRSDPALAKDSSEDKALDVEESENTNADDK.

A signal peptide spans 1 to 22 (MYRINLTTFTLLLVLAVGSLMS). A propeptide spanning residues 23–56 (ESLHPSDGAINDLYEYLLQREYAAPVSYADHQIK) is cleaved from the precursor. A phenylalanine amide mark is found at F69 and F101. W132 carries the tryptophan amide modification. A Phenylalanine amide modification is found at F165. Residues 181–190 (TTGQQAQPAN) are compositionally biased toward polar residues. Positions 181 to 234 (TTGQQAQPANEASEKRAPTQRLRWGRSDPALAKDSSEDKALDVEESENTNADDK) are disordered. A Tryptophan amide modification is found at W204. A propeptide spanning residues 207 to 234 (SDPALAKDSSEDKALDVEESENTNADDK) is cleaved from the precursor.

This sequence belongs to the NPY family. In terms of tissue distribution, expressed in all body parts of larva, pupae and adults.

Its subcellular location is the secreted. In terms of biological role, plays a role in controlling food intake and regulating body size. The chain is Short neuropeptide F from Anopheles gambiae (African malaria mosquito).